We begin with the raw amino-acid sequence, 901 residues long: ABC transporter A family member 8 (901 aa).

The next 7 helical transmembrane spans lie at 34–54, 315–335, 369–389, 402–422, 427–447, 460–477, and 508–528; these read LITI…LFDT, IASL…FPVI, FLLI…LIGL, VFFF…SAMF, TATV…IFLF, WIIA…RGLY, and CIML…DQII. The region spanning 586 to 823 is the ABC transporter domain; that stretch reads VLCNNLKKVY…YGGSYVLTVT (238 aa). 624 to 631 contributes to the ATP binding site; the sequence is GPNGAGKT.

This sequence belongs to the ABC transporter superfamily. ABCA family. CPR flippase (TC 3.A.1.211) subfamily.

It localises to the membrane. The polypeptide is ABC transporter A family member 8 (ABCA8) (Arabidopsis thaliana (Mouse-ear cress)).